A 474-amino-acid chain; its full sequence is Proline--tRNA ligase (474 aa).

The protein belongs to the class-II aminoacyl-tRNA synthetase family. ProS type 3 subfamily. As to quaternary structure, homodimer.

The protein localises to the cytoplasm. It catalyses the reaction tRNA(Pro) + L-proline + ATP = L-prolyl-tRNA(Pro) + AMP + diphosphate. In terms of biological role, catalyzes the attachment of proline to tRNA(Pro) in a two-step reaction: proline is first activated by ATP to form Pro-AMP and then transferred to the acceptor end of tRNA(Pro). The polypeptide is Proline--tRNA ligase (Mycoplasma capricolum subsp. capricolum (strain California kid / ATCC 27343 / NCTC 10154)).